The primary structure comprises 76 residues: Sulfur carrier protein TusA (76 aa).

Catalysis depends on C14, which acts as the Cysteine persulfide intermediate.

The protein belongs to the sulfur carrier protein TusA family. As to quaternary structure, interacts with IscS.

Its subcellular location is the cytoplasm. The protein operates within tRNA modification. Sulfur carrier protein involved in sulfur trafficking in the cell. Part of a sulfur-relay system required for 2-thiolation during synthesis of 2-thiouridine of the modified wobble base 5-methylaminomethyl-2-thiouridine (mnm(5)s(2)U) in tRNA. Interacts with IscS and stimulates its cysteine desulfurase activity. Accepts an activated sulfur from IscS, which is then transferred to TusD, and thus determines the direction of sulfur flow from IscS to 2-thiouridine formation. Also appears to be involved in sulfur transfer for the biosynthesis of molybdopterin. This chain is Sulfur carrier protein TusA, found in Buchnera aphidicola subsp. Acyrthosiphon pisum (strain 5A).